A 105-amino-acid chain; its full sequence is Thioredoxin (105 aa).

Positions 2 to 105 (VKQIESKSAF…KLEATINELL (104 aa)) constitute a Thioredoxin domain. K3 bears the N6-acetyllysine mark. K8 carries the post-translational modification N6-succinyllysine. Catalysis depends on nucleophile residues C32 and C35. An intrachain disulfide couples C32 to C35. K39 is modified (N6-acetyllysine). S-nitrosocysteine occurs at positions 62 and 69. C73 carries the post-translational modification S-nitrosocysteine; alternate. Position 94 is an N6-acetyllysine; alternate (K94). K94 is modified (N6-succinyllysine; alternate).

It belongs to the thioredoxin family. As to quaternary structure, homodimer; disulfide-linked. Interacts with TXNIP through the redox-active site. Interacts with MAP3K5 and CASP3. Interacts with APEX1; the interaction stimulates the FOS/JUN AP-1 DNA-binding activity in a redox-dependent manner. In the fully reduced protein, both Cys-69 and Cys-73 are nitrosylated in response to nitric oxide (NO). When two disulfide bonds are present in the protein, only Cys-73 is nitrosylated. Cys-73 can serve as donor for nitrosylation of target proteins.

Its subcellular location is the nucleus. It is found in the cytoplasm. The protein resides in the secreted. Participates in various redox reactions through the reversible oxidation of its active center dithiol to a disulfide and catalyzes dithiol-disulfide exchange reactions. Plays a role in the reversible S-nitrosylation of cysteine residues in target proteins, and thereby contributes to the response to intracellular nitric oxide. Nitrosylates the active site Cys of CASP3 in response to nitric oxide (NO), and thereby inhibits caspase-3 activity. Induces the FOS/JUN AP-1 DNA binding activity in ionizing radiation (IR) cells through its oxidation/reduction status and stimulates AP-1 transcriptional activity. This chain is Thioredoxin (TXN), found in Oryctolagus cuniculus (Rabbit).